Here is a 64-residue protein sequence, read N- to C-terminus: Palmitoyl-CoA hydrolase (64 aa).

Belongs to the type-B carboxylesterase/lipase family. Monomer and homotrimer.

The protein localises to the microsome. It is found in the endoplasmic reticulum. It carries out the reaction hexadecanoyl-CoA + H2O = hexadecanoate + CoA + H(+). Its function is as follows. Hydrolysis of a variety of CoA thioesters of long-chain fatty acids. The sequence is that of Palmitoyl-CoA hydrolase from Rattus norvegicus (Rat).